A 299-amino-acid chain; its full sequence is MAESIHDVQRRINSTKATRQITSAMHMVSTAKLNKIQKQAVGYQDYVSKVKAVVMHLSQSHLLDNSSSSLQSNRPVKKTAYLVITSDRGMVGSYNSSVLRDTNAFIKERTPNPDDYMVLAVGGTGADFYKHRGVNVAYEYRGVSDVPEFNEVREIVKTVTTMFNNEVFDELFVCYNHFVNRISSRFRAEKMLPVDKETMSTDAAKDTQAAPLTAEYDTEPSEEEVLQVVLPQYAESLVYGAILDAKTAEHASSTNAMQSATDNADDLIATLQLHYNRARQAAITTEITEITGGQEALNN.

The protein belongs to the ATPase gamma chain family. As to quaternary structure, F-type ATPases have 2 components, CF(1) - the catalytic core - and CF(0) - the membrane proton channel. CF(1) has five subunits: alpha(3), beta(3), gamma(1), delta(1), epsilon(1). CF(0) has three main subunits: a, b and c.

It is found in the cell membrane. In terms of biological role, produces ATP from ADP in the presence of a proton gradient across the membrane. The gamma chain is believed to be important in regulating ATPase activity and the flow of protons through the CF(0) complex. The polypeptide is ATP synthase gamma chain (Levilactobacillus brevis (strain ATCC 367 / BCRC 12310 / CIP 105137 / JCM 1170 / LMG 11437 / NCIMB 947 / NCTC 947) (Lactobacillus brevis)).